A 391-amino-acid polypeptide reads, in one-letter code: Formate-dependent phosphoribosylglycinamide formyltransferase (391 aa).

Residues 20–21 (EL) and Glu-80 each bind N(1)-(5-phospho-beta-D-ribosyl)glycinamide. ATP is bound by residues Arg-112, Lys-153, 158-163 (SSGKGQ), 193-196 (EGFI), and Glu-201. Residues 117 to 306 (RLAAETLGLP…EFALHVRAIL (190 aa)) enclose the ATP-grasp domain. Positions 265 and 277 each coordinate Mg(2+). N(1)-(5-phospho-beta-D-ribosyl)glycinamide-binding positions include Asp-284, Lys-354, and 361 to 362 (RR).

The protein belongs to the PurK/PurT family. In terms of assembly, homodimer.

The catalysed reaction is N(1)-(5-phospho-beta-D-ribosyl)glycinamide + formate + ATP = N(2)-formyl-N(1)-(5-phospho-beta-D-ribosyl)glycinamide + ADP + phosphate + H(+). Its pathway is purine metabolism; IMP biosynthesis via de novo pathway; N(2)-formyl-N(1)-(5-phospho-D-ribosyl)glycinamide from N(1)-(5-phospho-D-ribosyl)glycinamide (formate route): step 1/1. Its function is as follows. Involved in the de novo purine biosynthesis. Catalyzes the transfer of formate to 5-phospho-ribosyl-glycinamide (GAR), producing 5-phospho-ribosyl-N-formylglycinamide (FGAR). Formate is provided by PurU via hydrolysis of 10-formyl-tetrahydrofolate. The polypeptide is Formate-dependent phosphoribosylglycinamide formyltransferase (Shewanella sp. (strain ANA-3)).